A 206-amino-acid polypeptide reads, in one-letter code: ATP-dependent Clp protease proteolytic subunit (206 aa).

Serine 110 acts as the Nucleophile in catalysis. The active site involves histidine 135.

It belongs to the peptidase S14 family. Fourteen ClpP subunits assemble into 2 heptameric rings which stack back to back to give a disk-like structure with a central cavity, resembling the structure of eukaryotic proteasomes.

It localises to the cytoplasm. The enzyme catalyses Hydrolysis of proteins to small peptides in the presence of ATP and magnesium. alpha-casein is the usual test substrate. In the absence of ATP, only oligopeptides shorter than five residues are hydrolyzed (such as succinyl-Leu-Tyr-|-NHMec, and Leu-Tyr-Leu-|-Tyr-Trp, in which cleavage of the -Tyr-|-Leu- and -Tyr-|-Trp bonds also occurs).. Functionally, cleaves peptides in various proteins in a process that requires ATP hydrolysis. Has a chymotrypsin-like activity. Plays a major role in the degradation of misfolded proteins. The chain is ATP-dependent Clp protease proteolytic subunit from Edwardsiella ictaluri (strain 93-146).